Consider the following 482-residue polypeptide: Glucose starvation modulator protein 1 (482 aa).

The zn(2)-C6 fungal-type DNA-binding region spans 20 to 48 (CVFCHEKHLQCDVGRPCQNCEKRNIGESC). Positions 350–422 (LLEYENMSKM…KLFNEYLAFS (73 aa)) constitute a PAS domain.

This sequence belongs to the ERT1/acuK family.

It localises to the nucleus. Its function is as follows. Transcription factor which regulates nonfermentable carbon utilization. The protein is Glucose starvation modulator protein 1 (GSM1) of Eremothecium gossypii (strain ATCC 10895 / CBS 109.51 / FGSC 9923 / NRRL Y-1056) (Yeast).